The primary structure comprises 244 residues: DNA polymerase sliding clamp (244 aa).

It belongs to the PCNA family. Homotrimer. The subunits circularize to form a toroid; DNA passes through its center. Replication factor C (RFC) is required to load the toroid on the DNA.

Sliding clamp subunit that acts as a moving platform for DNA processing. Responsible for tethering the catalytic subunit of DNA polymerase and other proteins to DNA during high-speed replication. The polypeptide is DNA polymerase sliding clamp (Methanobrevibacter smithii (strain ATCC 35061 / DSM 861 / OCM 144 / PS)).